Here is a 244-residue protein sequence, read N- to C-terminus: MRNVKLIIEYDGTNYHGWQKQKNAKTVQDTIERAIKGLTGEKVDLIGASRTDFGVHALGQVANFITNSGIPGDRFSYALNRMLPDDIVIKESQEVDMDFHARYKAKGKRYRYLIYNSQFPSALLRHRTYHVSHKLDFESMQRAASYFLGTHDFSAFRSSGSSAKTSVRTITDVSLEREDKIVKFEIAGDGFLYNMVRIIVGTLMEVGIGKIRADEIPQIIESRKRKRAGRTAPAEGLYLVEVYY.

The active-site Nucleophile is the D52. Residue Y110 coordinates substrate.

It belongs to the tRNA pseudouridine synthase TruA family. Homodimer.

It catalyses the reaction uridine(38/39/40) in tRNA = pseudouridine(38/39/40) in tRNA. Functionally, formation of pseudouridine at positions 38, 39 and 40 in the anticodon stem and loop of transfer RNAs. The sequence is that of tRNA pseudouridine synthase A from Acetivibrio thermocellus (strain ATCC 27405 / DSM 1237 / JCM 9322 / NBRC 103400 / NCIMB 10682 / NRRL B-4536 / VPI 7372) (Clostridium thermocellum).